The following is a 389-amino-acid chain: Succinate--CoA ligase [ADP-forming] subunit beta (389 aa).

The 236-residue stretch at lysine 9–glutamate 244 folds into the ATP-grasp domain. ATP is bound by residues lysine 46, glycine 53–glycine 55, glutamate 99, alanine 102, and glutamate 107. Mg(2+)-binding residues include asparagine 199 and aspartate 213. Substrate contacts are provided by residues asparagine 264 and glycine 321–methionine 323.

Belongs to the succinate/malate CoA ligase beta subunit family. Heterotetramer of two alpha and two beta subunits. Mg(2+) is required as a cofactor.

It catalyses the reaction succinate + ATP + CoA = succinyl-CoA + ADP + phosphate. The enzyme catalyses GTP + succinate + CoA = succinyl-CoA + GDP + phosphate. It participates in carbohydrate metabolism; tricarboxylic acid cycle; succinate from succinyl-CoA (ligase route): step 1/1. In terms of biological role, succinyl-CoA synthetase functions in the citric acid cycle (TCA), coupling the hydrolysis of succinyl-CoA to the synthesis of either ATP or GTP and thus represents the only step of substrate-level phosphorylation in the TCA. The beta subunit provides nucleotide specificity of the enzyme and binds the substrate succinate, while the binding sites for coenzyme A and phosphate are found in the alpha subunit. The protein is Succinate--CoA ligase [ADP-forming] subunit beta of Cupriavidus pinatubonensis (strain JMP 134 / LMG 1197) (Cupriavidus necator (strain JMP 134)).